A 647-amino-acid chain; its full sequence is Bifunctional enzyme CysN/CysC (647 aa).

The interval 1 to 472 is sulfate adenylyltransferase; the sequence is MSHQSDLIAT…TEERAARFGQ (472 aa). Residues 22–239 enclose the tr-type G domain; sequence KQLLRFITCG…LETVYIGSDR (218 aa). Residues 31-38 form a G1 region; the sequence is GSVDDGKS. 31-38 lines the GTP pocket; it reads GSVDDGKS. Residues 89 to 93 are G2; the sequence is GITID. Residues 110–113 form a G3 region; that stretch reads DTPG. GTP-binding positions include 110-114 and 165-168; these read DTPGH and NKMD. Residues 165–168 are G4; the sequence is NKMD. A G5 region spans residues 204-206; it reads SAL. An adenylyl-sulfate kinase region spans residues 473-614; sequence KPATVLLTGL…FPGVTAKYDV (142 aa). 481–488 contacts ATP; it reads GLTGSGKT.

The protein in the C-terminal section; belongs to the APS kinase family. In the N-terminal section; belongs to the TRAFAC class translation factor GTPase superfamily. Classic translation factor GTPase family. CysN/NodQ subfamily. As to quaternary structure, heterodimer composed of CysD, the smaller subunit, and CysNC.

The enzyme catalyses sulfate + ATP + H(+) = adenosine 5'-phosphosulfate + diphosphate. The catalysed reaction is adenosine 5'-phosphosulfate + ATP = 3'-phosphoadenylyl sulfate + ADP + H(+). It functions in the pathway sulfur metabolism; hydrogen sulfide biosynthesis; sulfite from sulfate: step 1/3. It participates in sulfur metabolism; hydrogen sulfide biosynthesis; sulfite from sulfate: step 2/3. In terms of biological role, with CysD forms the ATP sulfurylase (ATPS) that catalyzes the adenylation of sulfate producing adenosine 5'-phosphosulfate (APS) and diphosphate, the first enzymatic step in sulfur assimilation pathway. APS synthesis involves the formation of a high-energy phosphoric-sulfuric acid anhydride bond driven by GTP hydrolysis by CysN coupled to ATP hydrolysis by CysD. APS kinase catalyzes the synthesis of activated sulfate. In Rhodopirellula baltica (strain DSM 10527 / NCIMB 13988 / SH1), this protein is Bifunctional enzyme CysN/CysC (cysNC).